The following is a 414-amino-acid chain: Serpin A3-6 (414 aa).

Positions 1 to 25 (MRTERVSPLLALGILVAGLCSRVHC) are cleaved as a signal peptide. Residues asparagine 103, asparagine 183, asparagine 233, asparagine 267, and asparagine 321 are each glycosylated (N-linked (GlcNAc...) asparagine).

Belongs to the serpin family. Homodimer.

The protein localises to the cytoplasmic vesicle. It localises to the secretory vesicle. The protein resides in the chromaffin granule. It is found in the secreted. Its function is as follows. Serine protease inhibitor. The polypeptide is Serpin A3-6 (Bos taurus (Bovine)).